A 298-amino-acid polypeptide reads, in one-letter code: ADP/ATP translocase 2 (298 aa).

Met1 is modified (N-acetylmethionine). At 1–7 (MTDAAVS) the chain is on the mitochondrial intermembrane side. Position 2 is an N-acetylthreonine; in ADP/ATP translocase 2, N-terminally processed (Thr2). A Solcar 1 repeat occupies 6 to 98 (VSFAKDFLAG…FAFKDKYKQI (93 aa)). Ser7 is subject to Phosphoserine. Residues 8–37 (FAKDFLAGGVAAAISKTAVAPIERVKLLLQ) form a helical membrane-spanning segment. Lys23 is modified (N6-malonyllysine). The Mitochondrial matrix portion of the chain corresponds to 38–74 (VQHASKQITADKQYKGIMDCVVRIPKEQGVLSFWRGN). Lys43 is subject to N6-succinyllysine. Lys52 bears the N6,N6,N6-trimethyllysine; alternate mark. Lys52 carries the post-translational modification N6,N6-dimethyllysine; alternate. An N6-methyllysine; alternate modification is found at Lys52. A helical transmembrane segment spans residues 75-99 (LANVIRYFPTQALNFAFKDKYKQIF). ADP is bound by residues Arg80 and Lys92. 2 positions are modified to N6-malonyllysine: Lys92 and Lys96. The Mitochondrial intermembrane portion of the chain corresponds to 100 to 109 (LGGVDKRTQF). Lys105 is subject to N6-acetyllysine; alternate. At Lys105 the chain carries N6-succinyllysine; alternate. A helical transmembrane segment spans residues 110-130 (WRYFAGNLASGGAAGATSLCF). Solcar repeat units lie at residues 111-201 (RYFA…AKGM) and 212-297 (ISWM…IKKY). Residues 131–178 (VYPLDFARTRLAADVGKAGDAREFKGLGDCLVKITKSDGIRGLYQGFN) are Mitochondrial matrix-facing. N6-methyllysine; alternate is present on Lys147. N6-acetyllysine; alternate is present on residues Lys147 and Lys155. N6-succinyllysine; alternate occurs at positions 147 and 155. Lys147 is modified (N6-malonyllysine; alternate). N6-acetyllysine occurs at positions 163 and 166. The helical transmembrane segment at 179 to 199 (VSVQGIIIYRAAYFGIYDTAK) threads the bilayer. Topologically, residues 200–210 (GMLPDPKNTHI) are mitochondrial intermembrane. The helical transmembrane segment at 211 to 231 (FISWMIAQSVTAVAGLTSYPF) threads the bilayer. The Mitochondrial matrix segment spans residues 232-273 (DTVRRRMMMQSGRKGSDIMYTGTIDCWKKIARDEGSKAFFKG). Residue Arg235 coordinates ADP. Positions 235–240 (RRRMMM) are important for transport activity. The Nucleotide carrier signature motif signature appears at 235–240 (RRRMMM). N6-acetyllysine; alternate is present on Lys268. Lys268 carries the N6-succinyllysine; alternate modification. A helical membrane pass occupies residues 274 to 291 (AWSNVLRGMGGAFVLVLY). Residues 292 to 298 (DEIKKYT) are Mitochondrial intermembrane-facing.

Belongs to the mitochondrial carrier (TC 2.A.29) family. Monomer. Component of the MMXD complex, which includes CIAO1, ERCC2, CIAO2B, MMS19 and SLC25A5/ANT2. Interacts with AK4. Interacts with TIMM44; leading to inhibit the presequence translocase TIMM23, thereby promoting stabilization of PINK1. Trimethylated by ANTKMT at Lys-52.

It is found in the mitochondrion inner membrane. Its subcellular location is the membrane. The catalysed reaction is ADP(in) + ATP(out) = ADP(out) + ATP(in). It catalyses the reaction H(+)(in) = H(+)(out). The matrix-open state (m-state) is inhibited by the membrane-permeable bongkrekic acid (BKA). The cytoplasmic-open state (c-state) is inhibited by the membrane-impermeable toxic inhibitor carboxyatractyloside (CATR). Proton transporter activity is inhibited by ADP:ATP antiporter activity. ADP:ATP antiporter that mediates import of ADP into the mitochondrial matrix for ATP synthesis, and export of ATP out to fuel the cell. Cycles between the cytoplasmic-open state (c-state) and the matrix-open state (m-state): operates by the alternating access mechanism with a single substrate-binding site intermittently exposed to either the cytosolic (c-state) or matrix (m-state) side of the inner mitochondrial membrane. In addition to its ADP:ATP antiporter activity, also involved in mitochondrial uncoupling and mitochondrial permeability transition pore (mPTP) activity. Plays a role in mitochondrial uncoupling by acting as a proton transporter: proton transport uncouples the proton flows via the electron transport chain and ATP synthase to reduce the efficiency of ATP production and cause mitochondrial thermogenesis. Proton transporter activity is inhibited by ADP:ATP antiporter activity, suggesting that SLC25A5/ANT2 acts as a master regulator of mitochondrial energy output by maintaining a delicate balance between ATP production (ADP:ATP antiporter activity) and thermogenesis (proton transporter activity). Proton transporter activity requires free fatty acids as cofactor, but does not transport it. Probably mediates mitochondrial uncoupling in tissues that do not express UCP1. Also plays a key role in mPTP opening, a non-specific pore that enables free passage of the mitochondrial membranes to solutes of up to 1.5 kDa, and which contributes to cell death. It is however unclear if SLC25A5/ANT2 constitutes a pore-forming component of mPTP or regulates it. Acts as a regulator of mitophagy independently of ADP:ATP antiporter activity: promotes mitophagy via interaction with TIMM44, leading to inhibit the presequence translocase TIMM23, thereby promoting stabilization of PINK1. As part of the mitotic spindle-associated MMXD complex it may play a role in chromosome segregation. The polypeptide is ADP/ATP translocase 2 (Tachyglossus aculeatus aculeatus (Southeast Australian short-beaked echidna)).